A 91-amino-acid chain; its full sequence is Small ribosomal subunit protein bS20 (91 aa).

Residues 1–28 are disordered; the sequence is MANTASAEKRNRQAQKRRARNVQVRTGV.

It belongs to the bacterial ribosomal protein bS20 family.

Its function is as follows. Binds directly to 16S ribosomal RNA. The chain is Small ribosomal subunit protein bS20 from Anaeromyxobacter dehalogenans (strain 2CP-1 / ATCC BAA-258).